The chain runs to 109 residues: MQRTRLNTIVEVRGQQLSQFFRNPWRRISLSLLSFLFGFFVGTAVATTAGQNSQWDVVCAAFILLFCELVNRWFYRRGVKMGDLQAEVLNIFKMGVSYSLFLEAFKLGS.

Belongs to the ycf20 family.

The protein is Ycf20-like protein of Synechocystis sp. (strain ATCC 27184 / PCC 6803 / Kazusa).